Consider the following 243-residue polypeptide: 2-C-methyl-D-erythritol 4-phosphate cytidylyltransferase (243 aa).

The protein belongs to the IspD/TarI cytidylyltransferase family. IspD subfamily. In terms of assembly, homodimer.

The enzyme catalyses 2-C-methyl-D-erythritol 4-phosphate + CTP + H(+) = 4-CDP-2-C-methyl-D-erythritol + diphosphate. Its pathway is isoprenoid biosynthesis; isopentenyl diphosphate biosynthesis via DXP pathway; isopentenyl diphosphate from 1-deoxy-D-xylulose 5-phosphate: step 2/6. Functionally, catalyzes the formation of 4-diphosphocytidyl-2-C-methyl-D-erythritol from CTP and 2-C-methyl-D-erythritol 4-phosphate (MEP). The chain is 2-C-methyl-D-erythritol 4-phosphate cytidylyltransferase from Photorhabdus laumondii subsp. laumondii (strain DSM 15139 / CIP 105565 / TT01) (Photorhabdus luminescens subsp. laumondii).